Here is an 894-residue protein sequence, read N- to C-terminus: B-cell lymphoma/leukemia 11B (894 aa).

Residues serine 97 and serine 110 each carry the phosphoserine modification. A Phosphothreonine modification is found at threonine 120. At serine 129 the chain carries Phosphoserine. Lysine 137 is covalently cross-linked (Glycyl lysine isopeptide (Lys-Gly) (interchain with G-Cter in SUMO2)). The C2H2-type 1 zinc finger occupies 221–251; that stretch reads YICTTCKQPFNSAWFLLQHAQNTHGFRIYLE. Serine 256 is subject to Phosphoserine. Threonine 260 is subject to Phosphothreonine. Serine 277 is subject to Phosphoserine. Omega-N-methylarginine is present on arginine 293. The residue at position 322 (arginine 322) is an Asymmetric dimethylarginine. The residue at position 358 (serine 358) is a Phosphoserine. Disordered stretches follow at residues 370-428 and 471-583; these read LAGN…KSKS and KRHM…GGGA. A Phosphothreonine modification is found at threonine 376. Residues serine 381, serine 398, and serine 401 each carry the phosphoserine modification. Pro residues predominate over residues 396–423; sequence QPSPKSPFLSTPPLPPMPPGGTPPPQPP. Residues threonine 406 and threonine 417 each carry the phosphothreonine modification. C2H2-type zinc fingers lie at residues 427–454 and 455–482; these read KSCE…GEKP and YKCQ…HKAG. Over residues 471-480 the composition is skewed to basic residues; the sequence is KRHMKTHMHK. Serine 483, serine 488, serine 496, and serine 497 each carry phosphoserine. Basic and acidic residues predominate over residues 511–529; sequence KAADGDFRHHESDPSLGHE. A compositionally biased stretch (acidic residues) spans 530-546; the sequence is PEEEDEEEEEEEEELLL. Residues 568 to 583 show a composition bias toward gly residues; the sequence is NGGGGVPGVPGAGGGA. Glycyl lysine isopeptide (Lys-Gly) (interchain with G-Cter in SUMO2) cross-links involve residues lysine 591 and lysine 617. Residues 653–680 are disordered; that stretch reads GRGGGFAPGTEPFPGLFPRKPAPLPSPG. Serine 678 is modified (phosphoserine). Glycyl lysine isopeptide (Lys-Gly) (interchain with G-Cter in SUMO2) cross-links involve residues lysine 686 and lysine 723. The segment covering 737–752 has biased composition (polar residues); it reads FATSSEHSSENGSLRF. The segment at 737–794 is disordered; sequence FATSSEHSSENGSLRFSTPPGDLLDGGLSGRSGTASGGSTPHLGGPGPGRPSSKEGRR. The span at 753–775 shows a compositional bias: low complexity; the sequence is STPPGDLLDGGLSGRSGTASGGS. Threonine 754 carries the phosphothreonine modification. Phosphoserine is present on residues serine 765 and serine 772. 3 consecutive C2H2-type zinc fingers follow at residues 796 to 823, 824 to 853, and 854 to 884; these read DTCE…GERP, YKCE…GKEV, and YRCD…LLTN. The residue at position 851 (lysine 851) is an N6-acetyllysine. Lysine 887 participates in a covalent cross-link: Glycyl lysine isopeptide (Lys-Gly) (interchain with G-Cter in SUMO2).

Interacts with TFCOUP1, SIRT1, ARP1 and EAR2. Interacts with EP300; the interaction is detected in activated T-lymphocytes, but not under resting conditions. In terms of processing, sumoylated with SUMO1. As to expression, highly expressed in brain and in malignant T-cell lines derived from patients with adult T-cell leukemia/lymphoma.

It localises to the nucleus. Its function is as follows. Key regulator of both differentiation and survival of T-lymphocytes during thymocyte development in mammals. Essential in controlling the responsiveness of hematopoietic stem cells to chemotactic signals by modulating the expression of the receptors CCR7 and CCR9, which direct the movement of progenitor cells from the bone marrow to the thymus. Is a regulator of IL2 promoter and enhances IL2 expression in activated CD4(+) T-lymphocytes. Tumor-suppressor that represses transcription through direct, TFCOUP2-independent binding to a GC-rich response element. May also function in the P53-signaling pathway. In Homo sapiens (Human), this protein is B-cell lymphoma/leukemia 11B (BCL11B).